A 460-amino-acid chain; its full sequence is Chromosomal replication initiator protein DnaA 2 (460 aa).

Residues 1 to 68 (MRAWEDFLLL…KTSLVNNNGK (68 aa)) are domain I, interacts with DnaA modulators. A domain II region spans residues 68–102 (KLIRVHITSLDKTAPFYKEKQIQQEKTAYFTMQYG). Residues 103 to 321 (NVNPEMTFGN…DALKLLSKRV (219 aa)) form a domain III, AAA+ region region. ATP is bound by residues G151, G153, K154, and T155. The domain IV, binds dsDNA stretch occupies residues 322 to 460 (AYKKLAQQLL…EFFPEEEISC (139 aa)).

The protein belongs to the DnaA family. Oligomerizes as a right-handed, spiral filament on DNA at oriC.

The protein resides in the cytoplasm. Functionally, plays an essential role in the initiation and regulation of chromosomal replication. ATP-DnaA binds to the origin of replication (oriC) to initiate formation of the DNA replication initiation complex once per cell cycle. Binds the DnaA box (a 9 base pair repeat at the origin) and separates the double-stranded (ds)DNA. Forms a right-handed helical filament on oriC DNA; dsDNA binds to the exterior of the filament while single-stranded (ss)DNA is stabiized in the filament's interior. The ATP-DnaA-oriC complex binds and stabilizes one strand of the AT-rich DNA unwinding element (DUE), permitting loading of DNA polymerase. After initiation quickly degrades to an ADP-DnaA complex that is not apt for DNA replication. Binds acidic phospholipids. This chain is Chromosomal replication initiator protein DnaA 2, found in Chlamydia caviae (strain ATCC VR-813 / DSM 19441 / 03DC25 / GPIC) (Chlamydophila caviae).